A 260-amino-acid chain; its full sequence is Proansamycin X synthase (260 aa).

Cysteine 73 acts as the Acyl-thioester intermediate in catalysis. Residues histidine 111 and aspartate 126 contribute to the active site.

The protein belongs to the arylamine N-acetyltransferase family.

It functions in the pathway antibiotic biosynthesis; rifamycin B biosynthesis. Catalyzes the release of the completed linear polyketide from the rif PKS by forming an intramolecular amide bond, in this way terminating polyketide assembly and forming the macrocyclic compound proansamycin X, an intermediate in the rifamycin B biosynthesis. The polypeptide is Proansamycin X synthase (rifF) (Amycolatopsis mediterranei (strain S699) (Nocardia mediterranei)).